We begin with the raw amino-acid sequence, 169 residues long: Lutropin/choriogonadotropin subunit beta (169 aa).

The first 20 residues, 1–20 (METLQGLLLWMLLSVGGVWA), serve as a signal peptide directing secretion. 6 disulfide bridges follow: C29/C77, C43/C92, C46/C130, C54/C108, C58/C110, and C113/C120. N33 carries an N-linked (GlcNAc...) asparagine glycan. Residues 131–169 (APQASSSSKDPPSQPLTSTSTPTPGASRRSSHPLPIKTS) are disordered. O-linked (GalNAc...) serine glycans are attached at residues S138 and S143. The segment covering 145–158 (PLTSTSTPTPGASR) has biased composition (low complexity). T147 is a glycosylation site (O-linked (GalNAc...) threonine). An O-linked (GalNAc...) serine glycan is attached at S148. T149 carries an O-linked (GalNAc...) threonine glycan. An O-linked (GalNAc...) serine glycan is attached at S150. 2 O-linked (GalNAc...) threonine glycosylation sites follow: T151 and T153. 4 O-linked (GalNAc...) serine glycosylation sites follow: S157, S160, S161, and S169.

The protein belongs to the glycoprotein hormones subunit beta family. Heterodimer of a common alpha chain and a unique beta chain which confers biological specificity to thyrotropin, lutropin, follitropin and gonadotropin. In terms of processing, microheterogeneity at Asn-33. O-glycosylation appears to be responsible for the beta subunit contribution to the difference in LH-receptor binding activity between LSH-B and CG-B.

It localises to the secreted. Promotes spermatogenesis and ovulation by stimulating the testes and ovaries to synthesize steroids. The protein is Lutropin/choriogonadotropin subunit beta (LHB) of Equus caballus (Horse).